The primary structure comprises 313 residues: Bifunctional pinoresinol-lariciresinol reductase 1 (313 aa).

Residues 11 to 17, R36, and K45 contribute to the NADP(+) site; that span reads GGTGYIG. K138 acts as the Proton acceptor in catalysis. R142 contributes to the NADP(+) binding site. Position 271 (H271) interacts with substrate.

It belongs to the NmrA-type oxidoreductase family. Isoflavone reductase subfamily. In terms of assembly, dimer.

The enzyme catalyses (+)-lariciresinol + NADP(+) = (+)-pinoresinol + NADPH + H(+). It carries out the reaction (-)-lariciresinol + NADP(+) = (-)-pinoresinol + NADPH + H(+). It catalyses the reaction (+)-secoisolariciresinol + NADP(+) = (-)-lariciresinol + NADPH + H(+). In terms of biological role, reductase involved in lignan biosynthesis. Catalyzes the enantioselective sequential conversion of (-)-pinoresinol into (-)-lariciresinol and of (-)-lariciresinol into (+)-secoisolariciresinol. Can also convert with a lower efficiency (+)-pinoresinol into (+)-lariciresinol, but not (+)-lariciresinol into (-)-secoisolariciresinol. Abstracts the 4R-hydride from the NADPH cofactor during catalysis. The polypeptide is Bifunctional pinoresinol-lariciresinol reductase 1 (PLR_Tp1) (Thuja plicata (Western red-cedar)).